A 311-amino-acid polypeptide reads, in one-letter code: Malate dehydrogenase (311 aa).

Residues 7-13 and aspartate 34 contribute to the NAD(+) site; that span reads GAAGGIG. Positions 81 and 87 each coordinate substrate. NAD(+) is bound by residues asparagine 94 and 117-119; that span reads ITN. Substrate contacts are provided by asparagine 119 and arginine 153. The Proton acceptor role is filled by histidine 177. Methionine 227 is a binding site for NAD(+).

This sequence belongs to the LDH/MDH superfamily. MDH type 1 family. In terms of assembly, homodimer.

The enzyme catalyses (S)-malate + NAD(+) = oxaloacetate + NADH + H(+). Its function is as follows. Catalyzes the reversible oxidation of malate to oxaloacetate. The protein is Malate dehydrogenase of Shewanella sp. (strain ANA-3).